A 566-amino-acid polypeptide reads, in one-letter code: Chromatin assembly factor 1 subunit B (566 aa).

6 WD repeats span residues 11 to 54, 64 to 103, 127 to 166, 169 to 208, 228 to 279, and 351 to 392; these read HNKE…DGKA, RHTK…ELEP, GHLE…KVSI, EHKS…VAFN, FHDD…RPMG, and IHYH…IPLK. 2 disordered regions span residues 411-481 and 501-566; these read KSQP…NQPR and IPLK…KPNK. Polar residues-rich tracts occupy residues 425–437 and 469–478; these read TEGT…TLQP and QPASQSTKVN.

Belongs to the WD repeat HIR1 family. In terms of assembly, interacts with CHAF1A.

The protein resides in the nucleus. Functionally, acts as a component of the histone chaperone complex chromatin assembly factor 1 (CAF-1), which assembles histone octamers onto DNA during replication and repair. CAF-1 performs the first step of the nucleosome assembly process, bringing newly synthesized histones H3 and H4 to replicating DNA; histones H2A/H2B can bind to this chromatin precursor subsequent to DNA replication to complete the histone octamer. The protein is Chromatin assembly factor 1 subunit B (CHAF1B) of Gallus gallus (Chicken).